The sequence spans 339 residues: UDP-3-O-acylglucosamine N-acyltransferase (339 aa).

The active-site Proton acceptor is His-251.

The protein belongs to the transferase hexapeptide repeat family. LpxD subfamily. In terms of assembly, homotrimer.

The catalysed reaction is a UDP-3-O-[(3R)-3-hydroxyacyl]-alpha-D-glucosamine + a (3R)-hydroxyacyl-[ACP] = a UDP-2-N,3-O-bis[(3R)-3-hydroxyacyl]-alpha-D-glucosamine + holo-[ACP] + H(+). It participates in bacterial outer membrane biogenesis; LPS lipid A biosynthesis. Its function is as follows. Catalyzes the N-acylation of UDP-3-O-acylglucosamine using 3-hydroxyacyl-ACP as the acyl donor. Is involved in the biosynthesis of lipid A, a phosphorylated glycolipid that anchors the lipopolysaccharide to the outer membrane of the cell. The chain is UDP-3-O-acylglucosamine N-acyltransferase from Paramagnetospirillum magneticum (strain ATCC 700264 / AMB-1) (Magnetospirillum magneticum).